A 278-amino-acid polypeptide reads, in one-letter code: Tryptophan synthase alpha chain (278 aa).

Residues E49 and D60 each act as proton acceptor in the active site.

This sequence belongs to the TrpA family. Tetramer of two alpha and two beta chains.

It carries out the reaction (1S,2R)-1-C-(indol-3-yl)glycerol 3-phosphate + L-serine = D-glyceraldehyde 3-phosphate + L-tryptophan + H2O. Its pathway is amino-acid biosynthesis; L-tryptophan biosynthesis; L-tryptophan from chorismate: step 5/5. The alpha subunit is responsible for the aldol cleavage of indoleglycerol phosphate to indole and glyceraldehyde 3-phosphate. This chain is Tryptophan synthase alpha chain, found in Psychrobacter arcticus (strain DSM 17307 / VKM B-2377 / 273-4).